Reading from the N-terminus, the 306-residue chain is Ornithine carbamoyltransferase (306 aa).

Residues 51 to 54 (STRT), Gln78, Arg102, and 129 to 132 (HPVQ) contribute to the carbamoyl phosphate site. L-ornithine is bound by residues Asn157, Asp221, and 225–226 (SM). Carbamoyl phosphate-binding positions include 261 to 262 (CL) and Arg289.

This sequence belongs to the aspartate/ornithine carbamoyltransferase superfamily. OTCase family.

The protein localises to the cytoplasm. It carries out the reaction carbamoyl phosphate + L-ornithine = L-citrulline + phosphate + H(+). It participates in amino-acid biosynthesis; L-arginine biosynthesis; L-arginine from L-ornithine and carbamoyl phosphate: step 1/3. In terms of biological role, reversibly catalyzes the transfer of the carbamoyl group from carbamoyl phosphate (CP) to the N(epsilon) atom of ornithine (ORN) to produce L-citrulline. This is Ornithine carbamoyltransferase from Campylobacter hominis (strain ATCC BAA-381 / DSM 21671 / CCUG 45161 / LMG 19568 / NCTC 13146 / CH001A).